Here is a 759-residue protein sequence, read N- to C-terminus: Protein hunchback (759 aa).

Disordered regions lie at residues 30 to 51 (EPGH…PIPS) and 171 to 215 (SSEK…EDMK). The segment covering 39-51 (SVASSPRQSPIPS) has biased composition (polar residues). Thr179 bears the Phosphothreonine mark. Phosphoserine occurs at positions 189, 208, 210, and 211. Positions 199-215 (EPEKEHDQMSNSSEDMK) are enriched in basic and acidic residues. 4 C2H2-type zinc fingers span residues 241 to 263 (YKCK…TRTH), 270 to 292 (LQCP…IRKH), 298 to 320 (FQCD…RKSH), and 326 to 350 (YRCA…KYGH). Disordered stretches follow at residues 366–419 (LVID…TSQL), 513–565 (QLQQ…PQQP), and 606–696 (MTSP…APAS). 2 stretches are compositionally biased toward low complexity: residues 399-419 (VAAV…TSQL) and 513-522 (QLQQQNQQQS). A compositionally biased stretch (acidic residues) spans 523–532 (DNEEEEQDDE). Phosphoserine is present on residues Ser537 and Ser540. Low complexity predominate over residues 655-696 (ANTSASSTASSSGNSSNASSNGNSSSNSSSNGTSSAAAAPAS). 2 C2H2-type zinc fingers span residues 706–728 (YECK…MGYH) and 734–758 (FKCN…RNAH).

Belongs to the hunchback C2H2-type zinc-finger protein family.

Its subcellular location is the nucleus. Functionally, gap class segmentation protein that controls development of head structures. This is Protein hunchback from Drosophila yakuba (Fruit fly).